A 590-amino-acid chain; its full sequence is Cell division protein FtsZ 1 (590 aa).

Residues 24–28, 111–113, Glu-142, Arg-146, and Asp-190 contribute to the GTP site; these read GGGGN and GTG. Disordered stretches follow at residues 346–372 and 524–590; these read AAVPAQPQPTVSLQPVPQPQPVQQPLQ and EATN…RQSS. The segment covering 534–546 has biased composition (low complexity); the sequence is AAAPSAASQQRRP. Basic and acidic residues predominate over residues 559 to 576; it reads GQLDDHGRAAPQMRSHED.

The protein belongs to the FtsZ family. As to quaternary structure, homodimer. Polymerizes to form a dynamic ring structure in a strictly GTP-dependent manner. Interacts directly with several other division proteins.

It is found in the cytoplasm. Functionally, essential cell division protein that forms a contractile ring structure (Z ring) at the future cell division site. The regulation of the ring assembly controls the timing and the location of cell division. One of the functions of the FtsZ ring is to recruit other cell division proteins to the septum to produce a new cell wall between the dividing cells. Binds GTP and shows GTPase activity. This is Cell division protein FtsZ 1 from Rhizobium meliloti (strain 1021) (Ensifer meliloti).